We begin with the raw amino-acid sequence, 236 residues long: MEKREQLYAGKAKSIFNTDDPDHLVMLFRNDTSAFDGKRVEQLDRKGMVNNKFNAFIMGKLQAAGIPTHFVKLLSDTEALVKKMDMIPVECVVRNLAAGSLVRRLGVQEGQVLNPPTFELFLKNDALGDPMINESHVESFGWATREQLARMKELTFKINEVLKDLFAAGNMLLVDFKVEFGLHKGEVILGDEFSPDGCRLWDKDTREKLDKDRFRQNLGNVVESYELVGQRLGLTF.

This sequence belongs to the SAICAR synthetase family.

It carries out the reaction 5-amino-1-(5-phospho-D-ribosyl)imidazole-4-carboxylate + L-aspartate + ATP = (2S)-2-[5-amino-1-(5-phospho-beta-D-ribosyl)imidazole-4-carboxamido]succinate + ADP + phosphate + 2 H(+). It participates in purine metabolism; IMP biosynthesis via de novo pathway; 5-amino-1-(5-phospho-D-ribosyl)imidazole-4-carboxamide from 5-amino-1-(5-phospho-D-ribosyl)imidazole-4-carboxylate: step 1/2. The chain is Phosphoribosylaminoimidazole-succinocarboxamide synthase from Cellvibrio japonicus (strain Ueda107) (Pseudomonas fluorescens subsp. cellulosa).